The sequence spans 188 residues: Elongation factor P (188 aa).

K34 bears the N6-(3,6-diaminohexanoyl)-5-hydroxylysine mark.

This sequence belongs to the elongation factor P family. Post-translationally, may be beta-lysylated on the epsilon-amino group of Lys-34 by the combined action of EpmA and EpmB, and then hydroxylated on the C5 position of the same residue by EpmC (if this protein is present). Lysylation is critical for the stimulatory effect of EF-P on peptide-bond formation. The lysylation moiety may extend toward the peptidyltransferase center and stabilize the terminal 3-CCA end of the tRNA. Hydroxylation of the C5 position on Lys-34 may allow additional potential stabilizing hydrogen-bond interactions with the P-tRNA.

It localises to the cytoplasm. It participates in protein biosynthesis; polypeptide chain elongation. Involved in peptide bond synthesis. Alleviates ribosome stalling that occurs when 3 or more consecutive Pro residues or the sequence PPG is present in a protein, possibly by augmenting the peptidyl transferase activity of the ribosome. Modification of Lys-34 is required for alleviation. The chain is Elongation factor P from Photobacterium profundum (strain SS9).